The chain runs to 347 residues: Uroporphyrinogen decarboxylase (347 aa).

Substrate-binding positions include 36–40 (RQAGR), aspartate 86, tyrosine 160, serine 212, and histidine 326.

Belongs to the uroporphyrinogen decarboxylase family. Homodimer.

The protein localises to the cytoplasm. The enzyme catalyses uroporphyrinogen III + 4 H(+) = coproporphyrinogen III + 4 CO2. It participates in porphyrin-containing compound metabolism; protoporphyrin-IX biosynthesis; coproporphyrinogen-III from 5-aminolevulinate: step 4/4. Its function is as follows. Catalyzes the decarboxylation of four acetate groups of uroporphyrinogen-III to yield coproporphyrinogen-III. This chain is Uroporphyrinogen decarboxylase, found in Wolbachia sp. subsp. Brugia malayi (strain TRS).